Consider the following 409-residue polypeptide: AP-1-like transcription factor YAP2 (409 aa).

2 consecutive short sequence motifs (bipartite nuclear localization signal) follow at residues 17–24 (MKKQMLLN) and 47–54 (SRRTAQNR). Positions 26–64 (DGTPKRKVGRPGRKRIDSEAKSRRTAQNRAAQRAFRDRK) are disordered. The bZIP domain occupies 43-106 (SEAKSRRTAQ…KSLLSEITKY (64 aa)). A basic motif region spans residues 46–69 (KSRRTAQNRAAQRAFRDRKEAKMK). Residues 71–99 (LQERVELLEQKDAQNKTTTDFLLCSLKSL) form a leucine-zipper region. A disordered region spans residues 127–156 (QKRENEKGTSTAVSKAAKELPSPNSDENMT). The segment at 356–387 (CYHILEEISSLPKYSSLDIDDLCSELIIKAKC) is c-CRD. Residues 372–379 (LDIDDLCS) carry the Nuclear export signal motif.

This sequence belongs to the bZIP family. YAP subfamily. Homodimer; disulfide-linked, upon oxidation. Interacts in the nucleus with the nuclear export protein CRM1. Interacts with RCK1. Depending on the oxidative stress inducing agent, CAD1/YAP2 can undergo two distinct conformational changes, both through oxidation of cysteine residues, and both masking the nuclear export signal, thus abolishing nuclear export by CRM1/exportin 1. Peroxide stress induces the formation of possible intramolecular disulfide bonds as well as intermolcular disulfide within a homodimer. Cadmium may bind directly to specific cysteine residues (Cys-391 and either Cys-356 or Cys-387) in the c-CRD.

The protein resides in the cytoplasm. Its subcellular location is the nucleus. In terms of biological role, transcription activator involved in oxidative stress response and cadmium resistance. Regulates the transcription of genes overrepresented for the function of stabilizing proteins including the inducible Hsp90-family protein HSP82. Preferentially binds to promoters with the core binding site 5'-TTA[CG]TAA-3'. Activity of the transcription factor is controlled through oxidation of specific cysteine residues resulting in the alteration of its subcellular location. Activation by alkyl hydroperoxides or cadmium induces nuclear accumulation and as a result CAD1/YAP2 transcriptional activity. This is AP-1-like transcription factor YAP2 from Saccharomyces cerevisiae (strain ATCC 204508 / S288c) (Baker's yeast).